The primary structure comprises 78 residues: Exodeoxyribonuclease 7 small subunit (78 aa).

Belongs to the XseB family. As to quaternary structure, heterooligomer composed of large and small subunits.

The protein localises to the cytoplasm. The catalysed reaction is Exonucleolytic cleavage in either 5'- to 3'- or 3'- to 5'-direction to yield nucleoside 5'-phosphates.. Its function is as follows. Bidirectionally degrades single-stranded DNA into large acid-insoluble oligonucleotides, which are then degraded further into small acid-soluble oligonucleotides. The sequence is that of Exodeoxyribonuclease 7 small subunit from Desulfitobacterium hafniense (strain Y51).